A 249-amino-acid chain; its full sequence is Fasciclin-like arabinogalactan protein 12 (249 aa).

The signal sequence occupies residues 1–24; it reads MEHSLIILLFTVLLLLTTTPGILS. Positions 37-181 constitute an FAS1 domain; sequence PTNVTKILEK…LAVYQVDKVL (145 aa). N-linked (GlcNAc...) asparagine glycosylation is found at N39, N71, N143, N152, and N159. The tract at residues 186 to 219 is disordered; it reads VFDPRPPAPAPAPSVSKSKKKKDDSDSSSDDSPA. D220 is lipidated: GPI-anchor amidated aspartate. A propeptide spans 221–249 (removed in mature form); sequence ASFALRNVGSVCDAVSFCVMSVMLAWFYL.

Belongs to the fasciclin-like AGP family.

It is found in the cell membrane. In terms of biological role, may be a cell surface adhesion protein. The protein is Fasciclin-like arabinogalactan protein 12 (FLA12) of Arabidopsis thaliana (Mouse-ear cress).